The following is a 331-amino-acid chain: HTH-type transcriptional regulator RipA (331 aa).

The region spanning 112–209 (RAVAQVLVSN…GATPSTFTTG (98 aa)) is the HTH araC/xylS-type domain. 2 DNA-binding regions (H-T-H motif) span residues 129 to 150 (EEFAEIQGVSARTLQRQFLKST) and 176 to 199 (ISVVANLVGFAATSSLTRAFRRHT).

In terms of biological role, under iron limitation, RipA negatively controls the expression of the acn (aconitase), catA (catechol 1,2 dioxygenase), leuCD (isopropylmalate dehydratase), narKGHJI (nitrite/nitrate transporter and nitrate reductase), sdhCAB (succinate dehydrogenase), pta (phosphotransacetylase) and katA (catalase) genes. Binds to the consensus sequence in the promoter region. The chain is HTH-type transcriptional regulator RipA from Corynebacterium glutamicum (strain ATCC 13032 / DSM 20300 / JCM 1318 / BCRC 11384 / CCUG 27702 / LMG 3730 / NBRC 12168 / NCIMB 10025 / NRRL B-2784 / 534).